Consider the following 76-residue polypeptide: Small ribosomal subunit protein bS18 (76 aa).

Belongs to the bacterial ribosomal protein bS18 family. In terms of assembly, part of the 30S ribosomal subunit. Forms a tight heterodimer with protein bS6.

Functionally, binds as a heterodimer with protein bS6 to the central domain of the 16S rRNA, where it helps stabilize the platform of the 30S subunit. The chain is Small ribosomal subunit protein bS18 from Brevibacillus brevis (strain 47 / JCM 6285 / NBRC 100599).